We begin with the raw amino-acid sequence, 290 residues long: 4-hydroxybenzoate octaprenyltransferase (290 aa).

A run of 9 helical transmembrane segments spans residues 20–40 (IGIL…AEGV), 43–63 (LDIL…GCVV), 92–112 (EALL…QPLN), 114–131 (LTIE…SYPF), 135–155 (FFAM…PMAF), 160–180 (GEVP…VIAY), 209–229 (VVGV…IGLL), 231–251 (NLGV…LYQY), and 266–286 (FLHN…DYLV).

This sequence belongs to the UbiA prenyltransferase family. Mg(2+) is required as a cofactor.

The protein localises to the cell inner membrane. It catalyses the reaction all-trans-octaprenyl diphosphate + 4-hydroxybenzoate = 4-hydroxy-3-(all-trans-octaprenyl)benzoate + diphosphate. It functions in the pathway cofactor biosynthesis; ubiquinone biosynthesis. Catalyzes the prenylation of para-hydroxybenzoate (PHB) with an all-trans polyprenyl group. Mediates the second step in the final reaction sequence of ubiquinone-8 (UQ-8) biosynthesis, which is the condensation of the polyisoprenoid side chain with PHB, generating the first membrane-bound Q intermediate 3-octaprenyl-4-hydroxybenzoate. The polypeptide is 4-hydroxybenzoate octaprenyltransferase (Nitrosospira multiformis (strain ATCC 25196 / NCIMB 11849 / C 71)).